The sequence spans 134 residues: Photosystem II lipoprotein Psb27 (134 aa).

Residues 1–24 (MSFLKNQLSRLLALILVVAIGLTA) form the signal peptide. Cys-25 carries the N-palmitoyl cysteine lipid modification. The S-diacylglycerol cysteine moiety is linked to residue Cys-25.

It belongs to the Psb27 family. Monomer. Forms a complex with a monomeric, partially assembled PSII. This is probably the complex in which D1 is assembled and/or replaced. Present in 6-10% of PSII complexes; mostly in monomeric PSII. These PSII do not evolve oxygen, do not have an assembled calcium-manganese-oxide cluster. Psb27-containing PSII seem to be assembly intermediates; a wild-type strain includes the intrinsic membrane proteins, Psb27, Pbs28, substoichiometric amounts of PsbO and PsbQ but no PsbU or PsbV, while a ctpA deletion mutant includes the intrinsic membrane proteins (D1 as precursor), Psb27, a very low amount of PsbO and PsbQ, but no PsbU or PsbV. Small amounts of Psb27 interact with the lumenal domain of CP43 (psbC) in wild-type and a ctpA mutant. A small amount can also be detected in monomeric and trimeric photosystem I (PSI), possibly via association with PsaB.

The protein resides in the cellular thylakoid membrane. Its function is as follows. Plays a role in the repair and/or biogenesis of the calcium-manganese-oxide cluster on the lumenal face of the thylakoid membrane. Photosystem II (PSII) complexes containing this protein are monomeric, are assembly intermediates lacking the calcium-manganese-oxide cluster and miss some of the lumenal subunits. Probably blocks binding of some of the small lumenal subunits. The polypeptide is Photosystem II lipoprotein Psb27 (Synechocystis sp. (strain ATCC 27184 / PCC 6803 / Kazusa)).